Reading from the N-terminus, the 381-residue chain is Cobalt-precorrin-5B C(1)-methyltransferase (381 aa).

This sequence belongs to the CbiD family.

The enzyme catalyses Co-precorrin-5B + S-adenosyl-L-methionine = Co-precorrin-6A + S-adenosyl-L-homocysteine. It functions in the pathway cofactor biosynthesis; adenosylcobalamin biosynthesis; cob(II)yrinate a,c-diamide from sirohydrochlorin (anaerobic route): step 6/10. Catalyzes the methylation of C-1 in cobalt-precorrin-5B to form cobalt-precorrin-6A. In Clostridium botulinum (strain Eklund 17B / Type B), this protein is Cobalt-precorrin-5B C(1)-methyltransferase.